The chain runs to 65 residues: Photosystem II reaction center protein H (65 aa).

Residues 27-47 (GAVPVMAFIGVLLLVFLVIML) traverse the membrane as a helical segment.

This sequence belongs to the PsbH family. In terms of assembly, PSII is composed of 1 copy each of membrane proteins PsbA, PsbB, PsbC, PsbD, PsbE, PsbF, PsbH, PsbI, PsbJ, PsbK, PsbL, PsbM, PsbT, PsbX, PsbY, Psb30/Ycf12, peripheral proteins PsbO, CyanoQ (PsbQ), PsbU, PsbV and a large number of cofactors. It forms dimeric complexes.

It is found in the cellular thylakoid membrane. Its function is as follows. One of the components of the core complex of photosystem II (PSII), required for its stability and/or assembly. PSII is a light-driven water:plastoquinone oxidoreductase that uses light energy to abstract electrons from H(2)O, generating O(2) and a proton gradient subsequently used for ATP formation. It consists of a core antenna complex that captures photons, and an electron transfer chain that converts photonic excitation into a charge separation. The sequence is that of Photosystem II reaction center protein H from Prochlorococcus marinus (strain NATL1A).